The sequence spans 966 residues: Probable LIM domain-containing serine/threonine-protein kinase DDB_G0286997 (966 aa).

2 LIM zinc-binding domains span residues 3 to 62 and 63 to 120; these read SRCG…LNAP and KCFK…KPPP. Disordered stretches follow at residues 208–291 and 331–588; these read YSLS…PTED and PLNQ…EQQV. The span at 211–231 shows a compositional bias: low complexity; that stretch reads SSPSSSSSSSSSSSSSSSSPP. Residues 232–269 are compositionally biased toward polar residues; the sequence is NTFNKSSDFLRNPLNNNVKSSSSSIGGNFVNKSQQQQQ. Low complexity-rich tracts occupy residues 270–284 and 331–350; these read PIDS…ISPS and PLNQ…SPNL. Positions 374-389 are enriched in polar residues; it reads TTTFSNPLLKTKNQSF. Positions 419–430 are enriched in pro residues; the sequence is PLPPPPITPIPS. The span at 431-449 shows a compositional bias: low complexity; the sequence is PSSSSIIINNQQQQQQESQ. Pro residues predominate over residues 490–511; that stretch reads KPIVLPPPPLDMEQLPLPPPPL. The segment covering 513 to 526 has biased composition (polar residues); the sequence is SSQINQSLKSTQHN. The segment covering 543-560 has biased composition (low complexity); the sequence is IQKQSIPTRKPQLPQSSN. Over residues 561-570 the composition is skewed to pro residues; the sequence is PSPPSPPSPQ. Residues 702–959 form the Protein kinase domain; sequence VIFGDVIAAG…DTLKKISESL (258 aa). ATP is bound by residues 708–716 and K729; that span reads IAAGASGKV. The active-site Proton acceptor is D825.

Belongs to the protein kinase superfamily. TKL Ser/Thr protein kinase family.

It carries out the reaction L-seryl-[protein] + ATP = O-phospho-L-seryl-[protein] + ADP + H(+). It catalyses the reaction L-threonyl-[protein] + ATP = O-phospho-L-threonyl-[protein] + ADP + H(+). The polypeptide is Probable LIM domain-containing serine/threonine-protein kinase DDB_G0286997 (Dictyostelium discoideum (Social amoeba)).